Consider the following 359-residue polypeptide: MSKNIVVLPGDHVGTEITNEAIKVLNAISEARPSIKFNFEHHLIGGAAIDATGVPLPDEASKKADAVLLGAVGGPKWGTGSVRPEQGLLKIRKELGLYANLRPCNFASDSLLDLSPLKPEYAKGTDFVVVRELVGGIYFGERKEDEGDGVAWDSEKYSVPEVQRITRMAAFLALQHNPPLPIWSLDKANVLASSRLWRKTVEETIKNEFPQLTVQHQLIDSAAMILVKSPTKLNGIVITNNMFGDIISDEASVIPGSLGLLPSASLASLPDTNKAFGLYEPCHGSAPDLPANKVNPIATILSAAMMLKLSLDLVEEGRAVEEAVRKVLDSGIRTGDLGGSNSTTEVGDAVAKAVKEILA.

Residue 74 to 85 coordinates NAD(+); it reads GPKWGTGSVRPE. Residues Arg92, Arg102, Arg131, and Asp220 each contribute to the substrate site. Residues Asp220, Asp245, and Asp249 each contribute to the Mg(2+) site. 284–295 is a binding site for NAD(+); the sequence is GSAPDLPANKVN.

The protein belongs to the isocitrate and isopropylmalate dehydrogenases family. In terms of assembly, homodimer. Mg(2+) is required as a cofactor. Mn(2+) serves as cofactor.

The protein localises to the cytoplasm. The catalysed reaction is (2R,3S)-3-isopropylmalate + NAD(+) = 4-methyl-2-oxopentanoate + CO2 + NADH. It functions in the pathway amino-acid biosynthesis; L-leucine biosynthesis; L-leucine from 3-methyl-2-oxobutanoate: step 3/4. In terms of biological role, catalyzes the oxidation of 3-carboxy-2-hydroxy-4-methylpentanoate (3-isopropylmalate) to 3-carboxy-4-methyl-2-oxopentanoate. The product decarboxylates to 4-methyl-2 oxopentanoate. In Kluyveromyces marxianus (Yeast), this protein is 3-isopropylmalate dehydrogenase (LEU2).